A 293-amino-acid polypeptide reads, in one-letter code: MTDSTRSLRNCLAPAKLNLFLHITGRRPNGYHDLQSVFQLLNWGDTLHFTLRDDGRVARVTDVPGVPEESDLVVRAANLLKAHTGTAAGVDIEIDKCLPMGAGLGGGSSDAATTLLALNRLWQLDLSRTELQSLAVKLGADVPFFVFGKNAFAEGIGEELAEVELPTRWFLVVTPRVHVPTAEIFSDELLTRNTKPVTIADFLAQQNSDAGWPDSFGRNDMQQVVTSKYAEVAQVVKWLYNVTPARMTGSGASVFAAFQSKHEAEAAKAQLPTGWNGAVAESLNEHPLFAFAS.

The active site involves K16. ATP is bound at residue 99-109 (PMGAGLGGGSS). D141 is a catalytic residue.

It belongs to the GHMP kinase family. IspE subfamily.

The enzyme catalyses 4-CDP-2-C-methyl-D-erythritol + ATP = 4-CDP-2-C-methyl-D-erythritol 2-phosphate + ADP + H(+). Its pathway is isoprenoid biosynthesis; isopentenyl diphosphate biosynthesis via DXP pathway; isopentenyl diphosphate from 1-deoxy-D-xylulose 5-phosphate: step 3/6. Catalyzes the phosphorylation of the position 2 hydroxy group of 4-diphosphocytidyl-2C-methyl-D-erythritol. The polypeptide is 4-diphosphocytidyl-2-C-methyl-D-erythritol kinase (Burkholderia ambifaria (strain MC40-6)).